Here is a 533-residue protein sequence, read N- to C-terminus: Retinoid isomerohydrolase (533 aa).

An N-acetylserine modification is found at Ser-2. A phosphothreonine mark is found at Thr-101 and Thr-105. Cys-112 carries S-palmitoyl cysteine; in membrane form lipidation. An N6-acetyllysine modification is found at Lys-113. Position 117 is a phosphoserine (Ser-117). Fe cation is bound at residue His-180. Cys-231 is lipidated: S-palmitoyl cysteine; in membrane form. Fe cation contacts are provided by His-241 and His-313. Residues Cys-329 and Cys-330 are each lipidated (S-palmitoyl cysteine; in membrane form). His-527 provides a ligand contact to Fe cation.

Belongs to the carotenoid oxygenase family. In terms of assembly, interacts with MYO7A; this mediates light-dependent intracellular transport of RPE65. Fe(2+) is required as a cofactor. Palmitoylation by LRAT regulates ligand binding specificity; the palmitoylated form (membrane form) specifically binds all-trans-retinyl-palmitate, while the soluble unpalmitoylated form binds all-trans-retinol (vitamin A). In terms of tissue distribution, retinal pigment epithelium specific.

It localises to the cytoplasm. The protein localises to the cell membrane. Its subcellular location is the microsome membrane. It catalyses the reaction an all-trans-retinyl ester + H2O = 11-cis-retinol + a fatty acid + H(+). The enzyme catalyses lutein = (3R,3'S)-zeaxanthin. The catalysed reaction is all-trans-retinyl hexadecanoate + H2O = 11-cis-retinol + hexadecanoate + H(+). Functionally, critical isomerohydrolase in the retinoid cycle involved in regeneration of 11-cis-retinal, the chromophore of rod and cone opsins. Catalyzes the cleavage and isomerization of all-trans-retinyl fatty acid esters to 11-cis-retinol which is further oxidized by 11-cis retinol dehydrogenase to 11-cis-retinal for use as visual chromophore. Essential for the production of 11-cis retinal for both rod and cone photoreceptors. Also capable of catalyzing the isomerization of lutein to meso-zeaxanthin an eye-specific carotenoid. The soluble form binds vitamin A (all-trans-retinol), making it available for LRAT processing to all-trans-retinyl ester. The membrane form, palmitoylated by LRAT, binds all-trans-retinyl esters, making them available for IMH (isomerohydrolase) processing to all-cis-retinol. The soluble form is regenerated by transferring its palmitoyl groups onto 11-cis-retinol, a reaction catalyzed by LRAT. In Bos taurus (Bovine), this protein is Retinoid isomerohydrolase (RPE65).